The sequence spans 48 residues: uncharacterized protein (48 aa).

This is an uncharacterized protein from Treponema pallidum (strain Nichols).